Reading from the N-terminus, the 89-residue chain is Small ribosomal subunit protein uS14A (89 aa).

Belongs to the universal ribosomal protein uS14 family. In terms of assembly, part of the 30S ribosomal subunit. Contacts proteins S3 and S10.

Binds 16S rRNA, required for the assembly of 30S particles and may also be responsible for determining the conformation of the 16S rRNA at the A site. The sequence is that of Small ribosomal subunit protein uS14A from Staphylococcus haemolyticus (strain JCSC1435).